The chain runs to 237 residues: Protein GrpE (237 aa).

2 disordered regions span residues 27-51 (EDRE…LSET) and 202-237 (AVSS…PQHS). 2 stretches are compositionally biased toward low complexity: residues 33-45 (ASTS…AEAS) and 204-213 (SSGSPTSEPS). Over residues 227 to 237 (TPASPQNPQHS) the composition is skewed to polar residues.

Belongs to the GrpE family. As to quaternary structure, homodimer.

It is found in the cytoplasm. Participates actively in the response to hyperosmotic and heat shock by preventing the aggregation of stress-denatured proteins, in association with DnaK and GrpE. It is the nucleotide exchange factor for DnaK and may function as a thermosensor. Unfolded proteins bind initially to DnaJ; upon interaction with the DnaJ-bound protein, DnaK hydrolyzes its bound ATP, resulting in the formation of a stable complex. GrpE releases ADP from DnaK; ATP binding to DnaK triggers the release of the substrate protein, thus completing the reaction cycle. Several rounds of ATP-dependent interactions between DnaJ, DnaK and GrpE are required for fully efficient folding. This chain is Protein GrpE, found in Synechococcus sp. (strain JA-3-3Ab) (Cyanobacteria bacterium Yellowstone A-Prime).